The chain runs to 141 residues: MAKKVKAIVKLQLPAGKATPAPPVGPALGQHGVPIMNFVKEYNEKTAHLAGQIIPVVVTIYEDRSFTFVLKTPPAADLLRRAAGIEKGAADPKRQKVGRVTREQIREIAQLKMPDLNARDLEAAMRMIEGTARSMGIEVVG.

This sequence belongs to the universal ribosomal protein uL11 family. As to quaternary structure, part of the ribosomal stalk of the 50S ribosomal subunit. Interacts with L10 and the large rRNA to form the base of the stalk. L10 forms an elongated spine to which L12 dimers bind in a sequential fashion forming a multimeric L10(L12)X complex. Post-translationally, one or more lysine residues are methylated.

Functionally, forms part of the ribosomal stalk which helps the ribosome interact with GTP-bound translation factors. The polypeptide is Large ribosomal subunit protein uL11 (Thermomicrobium roseum (strain ATCC 27502 / DSM 5159 / P-2)).